The primary structure comprises 61 residues: Small ribosomal subunit protein uS14 (61 aa).

Zn(2+) contacts are provided by cysteine 24, cysteine 27, cysteine 40, and cysteine 43.

Belongs to the universal ribosomal protein uS14 family. Zinc-binding uS14 subfamily. In terms of assembly, part of the 30S ribosomal subunit. Contacts proteins S3 and S10. The cofactor is Zn(2+).

Binds 16S rRNA, required for the assembly of 30S particles and may also be responsible for determining the conformation of the 16S rRNA at the A site. The polypeptide is Small ribosomal subunit protein uS14 (Syntrophobacter fumaroxidans (strain DSM 10017 / MPOB)).